The chain runs to 417 residues: UDP-N-acetylglucosamine 1-carboxyvinyltransferase (417 aa).

Lys-22 to Asn-23 lines the phosphoenolpyruvate pocket. UDP-N-acetyl-alpha-D-glucosamine is bound at residue Arg-91. The active-site Proton donor is the Cys-115. Cys-115 carries the post-translational modification 2-(S-cysteinyl)pyruvic acid O-phosphothioketal. Residues Arg-120–Leu-124, Asp-304, and Ile-326 contribute to the UDP-N-acetyl-alpha-D-glucosamine site.

Belongs to the EPSP synthase family. MurA subfamily.

The protein resides in the cytoplasm. It catalyses the reaction phosphoenolpyruvate + UDP-N-acetyl-alpha-D-glucosamine = UDP-N-acetyl-3-O-(1-carboxyvinyl)-alpha-D-glucosamine + phosphate. The protein operates within cell wall biogenesis; peptidoglycan biosynthesis. In terms of biological role, cell wall formation. Adds enolpyruvyl to UDP-N-acetylglucosamine. This chain is UDP-N-acetylglucosamine 1-carboxyvinyltransferase, found in Nitratidesulfovibrio vulgaris (strain ATCC 29579 / DSM 644 / CCUG 34227 / NCIMB 8303 / VKM B-1760 / Hildenborough) (Desulfovibrio vulgaris).